Here is a 177-residue protein sequence, read N- to C-terminus: Large ribosomal subunit protein eL20 (177 aa).

It belongs to the eukaryotic ribosomal protein eL20 family.

This Drosophila melanogaster (Fruit fly) protein is Large ribosomal subunit protein eL20 (RpL18A).